A 342-amino-acid chain; its full sequence is S-adenosylmethionine:tRNA ribosyltransferase-isomerase (342 aa).

Belongs to the QueA family. In terms of assembly, monomer.

It is found in the cytoplasm. The catalysed reaction is 7-aminomethyl-7-carbaguanosine(34) in tRNA + S-adenosyl-L-methionine = epoxyqueuosine(34) in tRNA + adenine + L-methionine + 2 H(+). Its pathway is tRNA modification; tRNA-queuosine biosynthesis. Its function is as follows. Transfers and isomerizes the ribose moiety from AdoMet to the 7-aminomethyl group of 7-deazaguanine (preQ1-tRNA) to give epoxyqueuosine (oQ-tRNA). This Streptococcus sanguinis (strain SK36) protein is S-adenosylmethionine:tRNA ribosyltransferase-isomerase.